The sequence spans 421 residues: ATP-dependent RNA helicase RhlB (421 aa).

A Q motif motif is present at residues 9–37; it reads QKFSDFALHPKVVEALEKKGFHNCTPIQA. A Helicase ATP-binding domain is found at 40–219; the sequence is LPLTLAGRDV…FEQMNNAEYI (180 aa). Residue 53 to 60 participates in ATP binding; sequence AQTGTGKT. The DEAD box signature appears at 165–168; sequence DEAD. Residues 245-390 form the Helicase C-terminal domain; the sequence is RLLQTLIEEE…VSKYNPDALM (146 aa). The tract at residues 392–421 is disordered; it reads DLPKPLRLTRPRTGNGPRRTGAPRNRRRSG. Positions 402 to 414 are enriched in low complexity; that stretch reads PRTGNGPRRTGAP.

This sequence belongs to the DEAD box helicase family. RhlB subfamily. In terms of assembly, component of the RNA degradosome, which is a multiprotein complex involved in RNA processing and mRNA degradation.

Its subcellular location is the cytoplasm. It catalyses the reaction ATP + H2O = ADP + phosphate + H(+). Its function is as follows. DEAD-box RNA helicase involved in RNA degradation. Has RNA-dependent ATPase activity and unwinds double-stranded RNA. The protein is ATP-dependent RNA helicase RhlB of Escherichia fergusonii (strain ATCC 35469 / DSM 13698 / CCUG 18766 / IAM 14443 / JCM 21226 / LMG 7866 / NBRC 102419 / NCTC 12128 / CDC 0568-73).